We begin with the raw amino-acid sequence, 375 residues long: Glutamate 5-kinase (375 aa).

Position 17 (Lys17) interacts with ATP. Residues Ser57, Asp144, and Asn156 each coordinate substrate. An ATP-binding site is contributed by 176–177 (TD). A PUA domain is found at 283–361 (KGELILDTGA…DEIEGILGYV (79 aa)).

Belongs to the glutamate 5-kinase family.

Its subcellular location is the cytoplasm. It carries out the reaction L-glutamate + ATP = L-glutamyl 5-phosphate + ADP. Its pathway is amino-acid biosynthesis; L-proline biosynthesis; L-glutamate 5-semialdehyde from L-glutamate: step 1/2. In terms of biological role, catalyzes the transfer of a phosphate group to glutamate to form L-glutamate 5-phosphate. This chain is Glutamate 5-kinase, found in Thioalkalivibrio sulfidiphilus (strain HL-EbGR7).